Consider the following 416-residue polypeptide: Meiotically up-regulated protein PB1A10.08 (416 aa).

The protein resides in the cytoplasm. May have a role in meiosis and sporulation. The polypeptide is Meiotically up-regulated protein PB1A10.08 (Schizosaccharomyces pombe (strain 972 / ATCC 24843) (Fission yeast)).